Consider the following 218-residue polypeptide: Ras-related protein YPT3 (218 aa).

20-27 lines the GTP pocket; it reads GDSGVGKS. An Effector region motif is present at residues 42–50; sequence SKSTIGVEF. GTP-binding positions include 68–72 and 126–129; these read DTAGQ and NKSD. The segment at 186–205 is disordered; it reads GDEGATSSAPPKGETINIKD. Residues C215 and C216 are each lipidated (S-geranylgeranyl cysteine).

This sequence belongs to the small GTPase superfamily. Rab family. As to expression, its expression is weak in leaves, higher in stems and roots, but highest in petals, stigma and stamens.

Its subcellular location is the cell membrane. In terms of biological role, protein transport. Probably involved in vesicular traffic. The chain is Ras-related protein YPT3 (YPT3) from Nicotiana plumbaginifolia (Leadwort-leaved tobacco).